Consider the following 113-residue polypeptide: ATP-dependent Clp protease adapter protein ClpS (113 aa).

The span at 1–11 shows a compositional bias: basic and acidic residues; sequence MHRDLHMMSDR. Positions 1 to 25 are disordered; sequence MHRDLHMMSDRSEDDGDTSILTATK.

This sequence belongs to the ClpS family. Binds to the N-terminal domain of the chaperone ClpA.

In terms of biological role, involved in the modulation of the specificity of the ClpAP-mediated ATP-dependent protein degradation. This chain is ATP-dependent Clp protease adapter protein ClpS, found in Roseobacter denitrificans (strain ATCC 33942 / OCh 114) (Erythrobacter sp. (strain OCh 114)).